We begin with the raw amino-acid sequence, 375 residues long: Queuine tRNA-ribosyltransferase (375 aa).

The active-site Proton acceptor is the aspartate 93. Residues 93 to 97 (DSGGF), aspartate 147, glutamine 191, and glycine 218 contribute to the substrate site. The interval 249–255 (GVGTPLD) is RNA binding. The active-site Nucleophile is the aspartate 268. The tract at residues 273–277 (TRNAR) is RNA binding; important for wobble base 34 recognition. Zn(2+) contacts are provided by cysteine 306, cysteine 308, cysteine 311, and histidine 337.

This sequence belongs to the queuine tRNA-ribosyltransferase family. As to quaternary structure, homodimer. Within each dimer, one monomer is responsible for RNA recognition and catalysis, while the other monomer binds to the replacement base PreQ1. The cofactor is Zn(2+).

It catalyses the reaction 7-aminomethyl-7-carbaguanine + guanosine(34) in tRNA = 7-aminomethyl-7-carbaguanosine(34) in tRNA + guanine. Its pathway is tRNA modification; tRNA-queuosine biosynthesis. Catalyzes the base-exchange of a guanine (G) residue with the queuine precursor 7-aminomethyl-7-deazaguanine (PreQ1) at position 34 (anticodon wobble position) in tRNAs with GU(N) anticodons (tRNA-Asp, -Asn, -His and -Tyr). Catalysis occurs through a double-displacement mechanism. The nucleophile active site attacks the C1' of nucleotide 34 to detach the guanine base from the RNA, forming a covalent enzyme-RNA intermediate. The proton acceptor active site deprotonates the incoming PreQ1, allowing a nucleophilic attack on the C1' of the ribose to form the product. After dissociation, two additional enzymatic reactions on the tRNA convert PreQ1 to queuine (Q), resulting in the hypermodified nucleoside queuosine (7-(((4,5-cis-dihydroxy-2-cyclopenten-1-yl)amino)methyl)-7-deazaguanosine). The sequence is that of Queuine tRNA-ribosyltransferase from Nitratidesulfovibrio vulgaris (strain DP4) (Desulfovibrio vulgaris).